The chain runs to 316 residues: Ornithine carbamoyltransferase (316 aa).

Carbamoyl phosphate contacts are provided by residues 59–62, Gln-86, Arg-110, and 137–140; these read STRT and HPCQ. L-ornithine-binding positions include Asn-168, Asp-232, and 236–237; that span reads SM. Carbamoyl phosphate-binding positions include 273-274 and Arg-301; that span reads CL.

Belongs to the aspartate/ornithine carbamoyltransferase superfamily. OTCase family.

The protein localises to the cytoplasm. The catalysed reaction is carbamoyl phosphate + L-ornithine = L-citrulline + phosphate + H(+). It participates in amino-acid biosynthesis; L-arginine biosynthesis; L-arginine from L-ornithine and carbamoyl phosphate: step 1/3. In terms of biological role, reversibly catalyzes the transfer of the carbamoyl group from carbamoyl phosphate (CP) to the N(epsilon) atom of ornithine (ORN) to produce L-citrulline. The sequence is that of Ornithine carbamoyltransferase (argF) from Listeria monocytogenes serovar 1/2a (strain ATCC BAA-679 / EGD-e).